A 196-amino-acid polypeptide reads, in one-letter code: MNYWIQHRLNCLEQAFNPKYCRALEHTIGIVARQFKAGNKLLICGNGGSAADAQHIAAEFVGRFQLHRKGLPAIALGTNPATLTAWSNDYEFETVFARQVEAFAQPGDILWGISTSGKSANVIRAMEMAKDLGLLTIGMAGNNGGMLKDLTDYPLFVSEYHTPYIQEIHLITYHRICEQVEAQLFAKAGLEAQIAV.

In terms of domain architecture, SIS spans 31–196 (VARQFKAGNK…KAGLEAQIAV (166 aa)). 46-48 (NGG) contributes to the substrate binding site. His55 and Glu59 together coordinate Zn(2+). Substrate contacts are provided by residues Glu59, 88 to 89 (ND), 114 to 116 (STS), Ser119, and Gln166. Zn(2+) is bound by residues Gln166 and His174.

Belongs to the SIS family. GmhA subfamily. Zn(2+) serves as cofactor.

Its subcellular location is the cytoplasm. The enzyme catalyses 2 D-sedoheptulose 7-phosphate = D-glycero-alpha-D-manno-heptose 7-phosphate + D-glycero-beta-D-manno-heptose 7-phosphate. It participates in carbohydrate biosynthesis; D-glycero-D-manno-heptose 7-phosphate biosynthesis; D-glycero-alpha-D-manno-heptose 7-phosphate and D-glycero-beta-D-manno-heptose 7-phosphate from sedoheptulose 7-phosphate: step 1/1. Functionally, catalyzes the isomerization of sedoheptulose 7-phosphate in D-glycero-D-manno-heptose 7-phosphate. The sequence is that of Phosphoheptose isomerase from Crocosphaera subtropica (strain ATCC 51142 / BH68) (Cyanothece sp. (strain ATCC 51142)).